A 595-amino-acid polypeptide reads, in one-letter code: MEPAAPSCNMIMIADQASVNAHGRHLDENRVYPSDKVPAHVANKILESGTETVRCDLTLEDMLGDYEYDDPTEEEKILMDRIADHVGNDNSDMAIKHAAVRSVLLSCKIAHLMIKQNYQSAINSATNILCQLANDIFERIERQRKMIYGCFRSEFDNVQLGRLMYDMYPHFMPTNLGPSEKRVWMSYVGEAIVAATNIDHALDERAAWAKTDCSLPGEFKPELCVLVGAIRRLHDPPCYTKPFLDAKSQLAVWQQMKAIESESVSTHVVVVEALKLRENLAKAVQETIAYERHQYHRVCQMMCNNMKDHLETTCMLARGRTLATLADLRSTRYNLALFLLSEMHIFDSFTMPRIRGAMKQARCMSYVERTISLAKFRELADRVHNRSAPSPQGVIEEQQQAGEEEQQQQQEIEYDPEMPPLEREEEQEDEQVEEEPPADEEEGGAVGGVTQEEPAGEATEEAEEDESQPGPSDNQVVPESSETPTPAEDEETQSADEGESQELEGSQQLILSRPAAPLTDSETDSDSEDDDEVTRIPVGFSLMTSPVLQPTTRSATAAASSGTAPRPALKRQYAMVHTRSKSSENQQQPKKKSKK.

Positions 384-595 (HNRSAPSPQG…QQQPKKKSKK (212 aa)) are disordered. Low complexity predominate over residues 392–401 (QGVIEEQQQA). 3 stretches are compositionally biased toward acidic residues: residues 402 to 416 (GEEEQQQQQEIEYDP), 423 to 443 (REEEQEDEQVEEEPPADEEEG), and 454 to 467 (PAGEATEEAEEDES). The segment covering 469–484 (PGPSDNQVVPESSETP) has biased composition (polar residues). Residues 487-502 (AEDEETQSADEGESQE) are compositionally biased toward acidic residues. Low complexity predominate over residues 503–512 (LEGSQQLILS). Positions 521–532 (SETDSDSEDDDE) are enriched in acidic residues. A compositionally biased stretch (low complexity) spans 550–567 (PTTRSATAAASSGTAPRP).

The protein localises to the host nucleus. Functionally, the IE1 protein has some additive effect on the trans-activating properties of the IE3 protein. In Mus musculus (Mouse), this protein is Immediate-early protein 1 (IE1).